A 293-amino-acid chain; its full sequence is 4-hydroxy-tetrahydrodipicolinate synthase (293 aa).

Thr-47 is a binding site for pyruvate. Residue Tyr-136 is the Proton donor/acceptor of the active site. Lys-164 functions as the Schiff-base intermediate with substrate in the catalytic mechanism. Position 206 (Ile-206) interacts with pyruvate.

It belongs to the DapA family. In terms of assembly, homotetramer; dimer of dimers.

Its subcellular location is the cytoplasm. The enzyme catalyses L-aspartate 4-semialdehyde + pyruvate = (2S,4S)-4-hydroxy-2,3,4,5-tetrahydrodipicolinate + H2O + H(+). It participates in amino-acid biosynthesis; L-lysine biosynthesis via DAP pathway; (S)-tetrahydrodipicolinate from L-aspartate: step 3/4. In terms of biological role, catalyzes the condensation of (S)-aspartate-beta-semialdehyde [(S)-ASA] and pyruvate to 4-hydroxy-tetrahydrodipicolinate (HTPA). This is 4-hydroxy-tetrahydrodipicolinate synthase from Listeria monocytogenes serovar 1/2a (strain ATCC BAA-679 / EGD-e).